Consider the following 586-residue polypeptide: ATP-dependent lipid A-core flippase (586 aa).

Transmembrane regions (helical) follow at residues 25-45 (AYFI…AQLI), 74-94 (LWFV…GAYF), 163-183 (VAWF…AFIC), and 264-284 (VLHI…MILW). The 290-residue stretch at 28–317 (IISFIGFGVF…LTKINSIIQK (290 aa)) folds into the ABC transmembrane type-1 domain. Residues 349-583 (VELKDVHFGY…SGVYANLYHS (235 aa)) form the ABC transporter domain. 382-389 (GSSGSGKS) contributes to the ATP binding site.

It belongs to the ABC transporter superfamily. Lipid exporter (TC 3.A.1.106) family. Homodimer.

Its subcellular location is the cell inner membrane. The catalysed reaction is ATP + H2O + lipid A-core oligosaccharideSide 1 = ADP + phosphate + lipid A-core oligosaccharideSide 2.. Involved in lipopolysaccharide (LPS) biosynthesis. Translocates lipid A-core from the inner to the outer leaflet of the inner membrane. Transmembrane domains (TMD) form a pore in the inner membrane and the ATP-binding domain (NBD) is responsible for energy generation. The chain is ATP-dependent lipid A-core flippase from Saccharophagus degradans (strain 2-40 / ATCC 43961 / DSM 17024).